The following is a 188-amino-acid chain: SRP-independent targeting protein 3 (188 aa).

A helical transmembrane segment spans residues 27 to 47; sequence TIIMYIRILYCSSIGISWIIY. Ser-157 carries the post-translational modification Phosphoserine. The segment at 157–188 is disordered; it reads SLFGGMGQTGPKTDKKSIEEAERAGNAGVKAE. A compositionally biased stretch (basic and acidic residues) spans 168–179; it reads KTDKKSIEEAER.

The protein belongs to the PHO88 family. In terms of assembly, interacts with ENV10/SND2. ENV10/SND2 and PHO88/SND3 form a complex with the translocon in the endoplasmic reticulum membrane.

It localises to the endoplasmic reticulum membrane. The protein resides in the mitochondrion. Functions in the SND pathway, a SRP (signal recognition particle) and GET (guided entry of tail-anchored proteins) independent pathway for targeting a broad range of substrate proteins to the endoplasmic reticulum. SND functions in parallel to GET in targeting proteins with downstream hydrophobic motifs. Involved in inorganic phosphate uptake. Also involved in telomere length regulation and maintenance. The polypeptide is SRP-independent targeting protein 3 (Saccharomyces cerevisiae (strain ATCC 204508 / S288c) (Baker's yeast)).